The primary structure comprises 625 residues: Inactive glucose-6-phosphate 1-dehydrogenase 4, chloroplastic (625 aa).

The N-terminal 49 residues, 1-49 (MSLSSCLLPFSQSATAPSSSVCSCHLAASFSNFPVSSRDYSFSRSGSLV), are a transit peptide targeting the chloroplast. NADP(+) contacts are provided by residues 160-167 (GATGELAR) and R194. An intrachain disulfide couples C212 to C220. K297 is a binding site for NADP(+). D-glucose 6-phosphate is bound by residues K297, 327-331 (HMLGR), E365, and D382. The active-site Proton acceptor is H387. 4 residues coordinate NADP(+): R471, R480, R513, and R606.

This sequence belongs to the glucose-6-phosphate dehydrogenase family. In terms of assembly, forms homodimer. Interacts with G6PD1. As to expression, expressed in leaves, stems and buds.

The protein resides in the plastid. It is found in the chloroplast stroma. Seems to be a catalytically inactive enzyme. This is Inactive glucose-6-phosphate 1-dehydrogenase 4, chloroplastic from Arabidopsis thaliana (Mouse-ear cress).